Reading from the N-terminus, the 273-residue chain is NAD-dependent protein deacylase (273 aa).

Positions R20 to G272 constitute a Deacetylase sirtuin-type domain. G48 to W67 contacts NAD(+). The substrate site is built by Y92 and R95. Position 129–132 (Q129–D132) interacts with NAD(+). Catalysis depends on H147, which acts as the Proton acceptor. Positions 155 and 174 each coordinate Zn(2+). NAD(+)-binding positions include G214–S216, N240–E242, and A258.

The protein belongs to the sirtuin family. Class III subfamily. The cofactor is Zn(2+).

The protein localises to the cytoplasm. The catalysed reaction is N(6)-acetyl-L-lysyl-[protein] + NAD(+) + H2O = 2''-O-acetyl-ADP-D-ribose + nicotinamide + L-lysyl-[protein]. It catalyses the reaction N(6)-succinyl-L-lysyl-[protein] + NAD(+) + H2O = 2''-O-succinyl-ADP-D-ribose + nicotinamide + L-lysyl-[protein]. The enzyme catalyses N(6)-(2-hydroxyisobutanoyl)-L-lysyl-[protein] + NAD(+) + H2O = 2''-O-(2-hydroxyisobutanoyl)-ADP-D-ribose + nicotinamide + L-lysyl-[protein]. Its function is as follows. NAD-dependent lysine deacetylase that specifically removes acetyl groups on target proteins. Also acts as a protein-lysine deacylase by mediating protein desuccinylation and de-2-hydroxyisobutyrylation. Modulates the activities of several proteins which are inactive in their acylated form. The polypeptide is NAD-dependent protein deacylase (Escherichia coli O157:H7).